The following is a 522-amino-acid chain: Protein nucleotidyltransferase YdiU (522 aa).

Residues glycine 109, glycine 111, arginine 112, lysine 132, aspartate 144, glycine 145, arginine 195, and arginine 202 each contribute to the ATP site. The active-site Proton acceptor is the aspartate 271. Asparagine 272 and aspartate 281 together coordinate Mg(2+). Aspartate 281 is a binding site for ATP.

The protein belongs to the SELO family. Mg(2+) serves as cofactor. Requires Mn(2+) as cofactor.

It carries out the reaction L-seryl-[protein] + ATP = 3-O-(5'-adenylyl)-L-seryl-[protein] + diphosphate. It catalyses the reaction L-threonyl-[protein] + ATP = 3-O-(5'-adenylyl)-L-threonyl-[protein] + diphosphate. The enzyme catalyses L-tyrosyl-[protein] + ATP = O-(5'-adenylyl)-L-tyrosyl-[protein] + diphosphate. The catalysed reaction is L-histidyl-[protein] + UTP = N(tele)-(5'-uridylyl)-L-histidyl-[protein] + diphosphate. It carries out the reaction L-seryl-[protein] + UTP = O-(5'-uridylyl)-L-seryl-[protein] + diphosphate. It catalyses the reaction L-tyrosyl-[protein] + UTP = O-(5'-uridylyl)-L-tyrosyl-[protein] + diphosphate. Functionally, nucleotidyltransferase involved in the post-translational modification of proteins. It can catalyze the addition of adenosine monophosphate (AMP) or uridine monophosphate (UMP) to a protein, resulting in modifications known as AMPylation and UMPylation. The sequence is that of Protein nucleotidyltransferase YdiU from Burkholderia lata (strain ATCC 17760 / DSM 23089 / LMG 22485 / NCIMB 9086 / R18194 / 383).